A 228-amino-acid polypeptide reads, in one-letter code: Geranylgeranylglyceryl phosphate synthase (228 aa).

Residue lysine 14 participates in sn-glycerol 1-phosphate binding. Mg(2+) contacts are provided by aspartate 16 and threonine 42. Residues 160–165 (YIEYSG), glycine 190, and 210–211 (GN) contribute to the sn-glycerol 1-phosphate site.

This sequence belongs to the GGGP/HepGP synthase family. Group I subfamily. It depends on Mg(2+) as a cofactor.

It localises to the cytoplasm. The enzyme catalyses sn-glycerol 1-phosphate + (2E,6E,10E)-geranylgeranyl diphosphate = sn-3-O-(geranylgeranyl)glycerol 1-phosphate + diphosphate. The protein operates within membrane lipid metabolism; glycerophospholipid metabolism. Its function is as follows. Prenyltransferase that catalyzes the transfer of the geranylgeranyl moiety of geranylgeranyl diphosphate (GGPP) to the C3 hydroxyl of sn-glycerol-1-phosphate (G1P). This reaction is the first ether-bond-formation step in the biosynthesis of archaeal membrane lipids. This Methanocella arvoryzae (strain DSM 22066 / NBRC 105507 / MRE50) protein is Geranylgeranylglyceryl phosphate synthase.